The primary structure comprises 89 residues: Snake venom serine protease rhinocerase (89 aa).

The Peptidase S1 domain occupies 1-89 (VIGGAECDIN…KVFDYIPWIK (89 aa)). Asp45 serves as the catalytic Charge relay system. An intrachain disulfide couples Cys64 to Cys69.

This sequence belongs to the peptidase S1 family. Snake venom subfamily. In terms of processing, glycosylated. As to expression, expressed by the venom gland.

The protein resides in the secreted. Its activity is regulated as follows. Inhibited by PMSF. Not inhibited by benzamidine. Snake venom serine protease that cleaves fibrinogen alpha and beta chains (FGA and FGB), but not gamma chains. Exhibits fibrinolytic and kininogenolytic. Preferentially cleaves after Arg and Lys residues. The protein is Snake venom serine protease rhinocerase of Bitis rhinoceros (West African gaboon viper).